The sequence spans 361 residues: MDAEKMLEIDGSYLEGGGQALRNALSLSCILGKPVRVVKIRASRPSPGLSHQHLHGLNLLRDITNADVVGNYLLSSTVEFTPRTILDNTYRVETHTAASITLIYQMALPVLLFAGRPSRLIVSGGTNVDFAPPVEYMQEVLLPNLKHFGVSFDLKVQRYGFYPRGQGRCQLDVQPVTKLNSGKLVAFGRIKSVSGVAYCAGRLPVNIAIDMQQTAQREIHRLWPSQQCSIEPIKHSRQKAFHNGAGILMTVNTTSDVVLGASALGKKRIDGHVLGSEASCQLGDYMRKQVCVDDYMQDQLIIYMALAVGRSTMRTGKLTNHTRTAINVAEQMTGVKFDVAMEPGGQMLVSCKGLGHVNKLI.

The ATP site is built by Gln105, Pro132, Tyr295, Asp298, Gln299, and His321. The active-site Tele-AMP-histidine intermediate is the His321.

It belongs to the RNA 3'-terminal cyclase family. Type 1 subfamily.

The protein localises to the nucleus. The protein resides in the nucleoplasm. It catalyses the reaction a 3'-end 3'-phospho-ribonucleotide-RNA + ATP = a 3'-end 2',3'-cyclophospho-ribonucleotide-RNA + AMP + diphosphate. Its function is as follows. Catalyzes the conversion of 3'-phosphate to a 2',3'-cyclic phosphodiester at the end of RNA. The mechanism of action of the enzyme occurs in 3 steps: (A) adenylation of the enzyme by ATP; (B) transfer of adenylate to an RNA-N3'P to produce RNA-N3'PP5'A; (C) and attack of the adjacent 2'-hydroxyl on the 3'-phosphorus in the diester linkage to produce the cyclic end product. Likely functions in some aspects of cellular RNA processing. Function plays an important role in a RNA repair and splicing pathway which controls axon regeneration in response to peripheral (PNS) and central nervous system (CNS) injury. In response to axotomy, negatively regulates splicing of Xbp1 which in turn activates downstream effectors which inhibit axon regeneration, including down-regulating the microtubule regulators ringer and futsch. This chain is RNA 3'-terminal phosphate cyclase, found in Drosophila melanogaster (Fruit fly).